Here is a 335-residue protein sequence, read N- to C-terminus: Adenine deaminase (335 aa).

Zn(2+)-binding residues include His17, His19, and His197. Glu200 functions as the Proton donor in the catalytic mechanism. Asp278 serves as a coordination point for Zn(2+). Asp279 contributes to the substrate binding site.

It belongs to the metallo-dependent hydrolases superfamily. Adenosine and AMP deaminases family. Adenine deaminase type 2 subfamily. Zn(2+) is required as a cofactor.

The catalysed reaction is adenine + H2O + H(+) = hypoxanthine + NH4(+). Catalyzes the hydrolytic deamination of adenine to hypoxanthine. Plays an important role in the purine salvage pathway and in nitrogen catabolism. The protein is Adenine deaminase of Marinomonas sp. (strain MWYL1).